The following is a 240-amino-acid chain: Ornithine decarboxylase antizyme (240 aa).

Disordered stretches follow at residues 18–45 (RSEP…SSAG) and 69–95 (DHDR…SSEF). The segment covering 21–33 (PISSSNRATKRTI) has biased composition (polar residues). Low complexity predominate over residues 34-43 (SSSSSSSSSS). Residues 69–84 (DHDRASPLKEYNRKTS) show a composition bias toward basic and acidic residues. Polar residues predominate over residues 85–95 (IDSTTTASSEF).

The protein belongs to the ODC antizyme family. In terms of assembly, interacts with ODC1 and thereby sterically blocks ODC homodimerization. In terms of tissue distribution, preferentially expressed in adult female midguts.

Its function is as follows. Ornithine decarboxylase (ODC) antizyme protein that negatively regulates ODC activity and intracellular polyamine biosynthesis and uptake in response to increased intracellular polyamine levels. Binds to ODC monomers, inhibiting the assembly of the functional ODC homodimer, and targets the monomers for ubiquitin-independent proteolytic destruction by the 26S proteasome. In Aedes aegypti (Yellowfever mosquito), this protein is Ornithine decarboxylase antizyme (Oda).